Consider the following 193-residue polypeptide: Flagellin B3 (193 aa).

A propeptide spanning residues 1-12 (MFEFITDEDERG) is cleaved from the precursor.

It belongs to the archaeal flagellin family. Glycosylated.

It is found in the archaeal flagellum. Functionally, flagellin is the subunit protein which polymerizes to form the filaments of archaeal flagella. This chain is Flagellin B3 (flaB3), found in Halobacterium salinarum (strain ATCC 700922 / JCM 11081 / NRC-1) (Halobacterium halobium).